The primary structure comprises 277 residues: Peptide deformylase 1A, chloroplastic (277 aa).

Positions 196 and 238 each coordinate Zn(2+). E239 is an active-site residue. H242 serves as a coordination point for Zn(2+).

The protein belongs to the polypeptide deformylase family. Zn(2+) serves as cofactor.

The protein resides in the plastid. Its subcellular location is the chloroplast stroma. It carries out the reaction N-terminal N-formyl-L-methionyl-[peptide] + H2O = N-terminal L-methionyl-[peptide] + formate. Its function is as follows. Removes the formyl group from the N-terminal Met of newly synthesized proteins. The chain is Peptide deformylase 1A, chloroplastic (PDF1A) from Solanum lycopersicum (Tomato).